The sequence spans 206 residues: Methylthioribulose-1-phosphate dehydratase (206 aa).

The Zn(2+) site is built by His-96 and His-98.

This sequence belongs to the aldolase class II family. MtnB subfamily. Requires Zn(2+) as cofactor.

The enzyme catalyses 5-(methylsulfanyl)-D-ribulose 1-phosphate = 5-methylsulfanyl-2,3-dioxopentyl phosphate + H2O. Its pathway is amino-acid biosynthesis; L-methionine biosynthesis via salvage pathway; L-methionine from S-methyl-5-thio-alpha-D-ribose 1-phosphate: step 2/6. Catalyzes the dehydration of methylthioribulose-1-phosphate (MTRu-1-P) into 2,3-diketo-5-methylthiopentyl-1-phosphate (DK-MTP-1-P). The protein is Methylthioribulose-1-phosphate dehydratase of Azotobacter vinelandii (strain DJ / ATCC BAA-1303).